The following is a 138-amino-acid chain: MRILWIVAVCLIGVEGNLFQFAKMINGKLGAFSVWNYISYGCYCGWGGQGTPKDATDRCCFVHDCCYGRVRGCNPKLAIYSYSFKKGNIVCGKNNGCLRDICECDRVAANCFHQNKNTYNKNYRFLSSSRCRQTSEQC.

The first 16 residues, 1-16 (MRILWIVAVCLIGVEG), serve as a signal peptide directing secretion. Disulfide bonds link cysteine 42/cysteine 131, cysteine 44/cysteine 60, cysteine 59/cysteine 111, cysteine 65/cysteine 138, cysteine 66/cysteine 104, cysteine 73/cysteine 97, and cysteine 91/cysteine 102. 3 residues coordinate Ca(2+): tyrosine 43, glycine 45, and glycine 47. Histidine 63 is a catalytic residue. A Ca(2+)-binding site is contributed by aspartate 64. Aspartate 105 is an active-site residue.

This sequence belongs to the phospholipase A2 family. Group II subfamily. D49 sub-subfamily. As to quaternary structure, heterodimer of a weakly toxic basic protein having phospholipase A2 activity (B chain (AC Q8JFG1)) and a non-toxic acidic protein functioning as its inhibitor (A chain). Ca(2+) is required as a cofactor. Expressed by the venom gland.

The protein resides in the secreted. The catalysed reaction is a 1,2-diacyl-sn-glycero-3-phosphocholine + H2O = a 1-acyl-sn-glycero-3-phosphocholine + a fatty acid + H(+). Functionally, heterodimer: postsynaptic neurotoxin. In terms of biological role, monomer: snake venom phospholipase A2 (PLA2) that shows postsynaptic neurotoxicity. PLA2 catalyzes the calcium-dependent hydrolysis of the 2-acyl groups in 3-sn-phosphoglycerides. In Vipera aspis aspis (Aspic viper), this protein is Basic phospholipase A2 vaspin B chain.